We begin with the raw amino-acid sequence, 472 residues long: Trigger factor (472 aa).

A PPIase FKBP-type domain is found at 174–261; it reads GDIALVSFKG…LEDLKIKELP (88 aa). Residues 433-472 are disordered; sequence NNTVVEKPPEKARDQIKEKSSKKKTTKTNKEKKSSKTPKS. A compositionally biased stretch (basic and acidic residues) spans 439 to 451; sequence KPPEKARDQIKEK.

Belongs to the FKBP-type PPIase family. Tig subfamily.

The protein localises to the cytoplasm. The enzyme catalyses [protein]-peptidylproline (omega=180) = [protein]-peptidylproline (omega=0). Involved in protein export. Acts as a chaperone by maintaining the newly synthesized protein in an open conformation. Functions as a peptidyl-prolyl cis-trans isomerase. The sequence is that of Trigger factor from Prochlorococcus marinus (strain NATL1A).